Reading from the N-terminus, the 341-residue chain is Heterogeneous nuclear ribonucleoproteins A2/B1 (341 aa).

RRM domains are found at residues 9–92 (RKLF…ESGK) and 100–179 (KKLF…LSRQ). A Glycyl lysine isopeptide (Lys-Gly) (interchain with G-Cter in SUMO2) cross-link involves residue lysine 10. Serine 17 is subject to Phosphoserine. Position 26 is an omega-N-methylarginine (arginine 26). Position 73 is a phosphoserine (serine 73). Lysine 92 is subject to N6,N6-dimethyllysine; alternate. Residue lysine 92 forms a Glycyl lysine isopeptide (Lys-Gly) (interchain with G-Cter in SUMO2); alternate linkage. Glycyl lysine isopeptide (Lys-Gly) (interchain with G-Cter in SUMO2) cross-links involve residues lysine 100, lysine 108, and lysine 125. Phosphothreonine is present on threonine 128. Serine 137 carries the phosphoserine modification. Residue lysine 140 forms a Glycyl lysine isopeptide (Lys-Gly) (interchain with G-Cter in SUMO2) linkage. Threonine 147 carries the post-translational modification Phosphothreonine. Residues lysine 156 and lysine 161 each participate in a glycyl lysine isopeptide (Lys-Gly) (interchain with G-Cter in SUMO2); alternate cross-link. Residues lysine 156 and lysine 161 each carry the N6-acetyllysine; alternate modification. Residue threonine 164 is modified to Phosphothreonine. Lysine 174 is covalently cross-linked (Glycyl lysine isopeptide (Lys-Gly) (interchain with G-Cter in SUMO2)). A phosphoserine mark is found at serine 177 and serine 189. The segment at 181–341 (MQEVQSSRSG…SGGYGGRSRY (161 aa)) is disordered. Over residues 190-211 (GRGGNFGFGDSRGGGGNFGPGP) the composition is skewed to gly residues. An Asymmetric dimethylarginine; alternate modification is found at arginine 191. The residue at position 191 (arginine 191) is a Dimethylated arginine; alternate. Omega-N-methylarginine; alternate is present on arginine 191. Phosphoserine is present on serine 200. Arginine 201 carries the post-translational modification Asymmetric dimethylarginine; alternate. A Dimethylated arginine; alternate modification is found at arginine 201. An Omega-N-methylarginine; alternate modification is found at arginine 201. At serine 213 the chain carries Phosphoserine. Arginine 216 bears the Omega-N-methylarginine mark. A phosphoserine mark is found at serine 219 and serine 224. Arginine 226 is subject to Omega-N-methylarginine. Residue serine 247 is modified to Phosphoserine. An Asymmetric dimethylarginine; alternate modification is found at arginine 254. Arginine 254 bears the Omega-N-methylarginine; alternate mark. Residues 296-335 (QQPSNYGPMKSGNFGGSRNMGGPYGGGNYGPGGSGGSGGY) are nuclear targeting sequence. Positions 308-341 (NFGGSRNMGGPYGGGNYGPGGSGGSGGYGGRSRY) are enriched in gly residues. Serine 312 carries the phosphoserine modification. At arginine 313 the chain carries Omega-N-methylarginine. Tyrosine 319 carries the post-translational modification Phosphotyrosine. Residues serine 329 and serine 332 each carry the phosphoserine modification. Residue tyrosine 335 is modified to Phosphotyrosine. At arginine 338 the chain carries Omega-N-methylarginine.

Identified in the spliceosome C complex. Identified in a IGF2BP1-dependent mRNP granule complex containing untranslated mRNAs. Interacts with IGF2BP1. Interacts with C9orf72. Interacts with DGCR8. Interacts with TARDBP. Interacts with CKAP5. Interacts with PPIA/CYPA. Interacts (via C-terminus) with FAM76B; the interaction results in retention of HNRNPA2B1 in the nucleus and inhibition of the NF-kappa-B-mediated inflammatory pathway. Interacts with NF-kappa-B inhibitors NFKBIA and NFKBIE; the interaction may be mediated by the RRM2 domain of HNRNPA2B1, and HNRNPA2B1 may interact simultaneously with FAM76B and either NFKBIA or NFKBIE to form a complex. Sumoylated in exosomes, promoting miRNAs-binding. In terms of processing, asymmetric dimethylation at Arg-254 constitutes the major methylation site. According to a report, methylation affects subcellular location and promotes nuclear localization. According to another report, methylation at Arg-254 does not influence nucleocytoplasmic shuttling.

It is found in the nucleus. Its subcellular location is the nucleoplasm. The protein resides in the cytoplasmic granule. It localises to the secreted. The protein localises to the extracellular exosome. Heterogeneous nuclear ribonucleoprotein (hnRNP) that associates with nascent pre-mRNAs, packaging them into hnRNP particles. The hnRNP particle arrangement on nascent hnRNA is non-random and sequence-dependent and serves to condense and stabilize the transcripts and minimize tangling and knotting. Packaging plays a role in various processes such as transcription, pre-mRNA processing, RNA nuclear export, subcellular location, mRNA translation and stability of mature mRNAs. Forms hnRNP particles with at least 20 other different hnRNP and heterogeneous nuclear RNA in the nucleus. Involved in transport of specific mRNAs to the cytoplasm in oligodendrocytes and neurons: acts by specifically recognizing and binding the A2RE (21 nucleotide hnRNP A2 response element) or the A2RE11 (derivative 11 nucleotide oligonucleotide) sequence motifs present on some mRNAs, and promotes their transport to the cytoplasm. Specifically binds single-stranded telomeric DNA sequences, protecting telomeric DNA repeat against endonuclease digestion. Also binds other RNA molecules, such as primary miRNA (pri-miRNAs): acts as a nuclear 'reader' of the N6-methyladenosine (m6A) mark by specifically recognizing and binding a subset of nuclear m6A-containing pri-miRNAs. Binding to m6A-containing pri-miRNAs promotes pri-miRNA processing by enhancing binding of DGCR8 to pri-miRNA transcripts. Involved in miRNA sorting into exosomes following sumoylation, possibly by binding (m6A)-containing pre-miRNAs. Acts as a regulator of efficiency of mRNA splicing, possibly by binding to m6A-containing pre-mRNAs. Plays a role in the splicing of pyruvate kinase PKM by binding repressively to sequences flanking PKM exon 9, inhibiting exon 9 inclusion and resulting in exon 10 inclusion and production of the PKM M2 isoform. This Saguinus oedipus (Cotton-top tamarin) protein is Heterogeneous nuclear ribonucleoproteins A2/B1 (HNRNPA2B1).